The chain runs to 270 residues: 3-methyl-2-oxobutanoate hydroxymethyltransferase (270 aa).

Positions 43 and 82 each coordinate Mg(2+). 3-methyl-2-oxobutanoate is bound by residues D43–S44, D82, and K110. E112 serves as a coordination point for Mg(2+). E179 acts as the Proton acceptor in catalysis.

Belongs to the PanB family. In terms of assembly, homodecamer; pentamer of dimers. Mg(2+) serves as cofactor.

Its subcellular location is the cytoplasm. The enzyme catalyses 3-methyl-2-oxobutanoate + (6R)-5,10-methylene-5,6,7,8-tetrahydrofolate + H2O = 2-dehydropantoate + (6S)-5,6,7,8-tetrahydrofolate. It participates in cofactor biosynthesis; (R)-pantothenate biosynthesis; (R)-pantoate from 3-methyl-2-oxobutanoate: step 1/2. Functionally, catalyzes the reversible reaction in which hydroxymethyl group from 5,10-methylenetetrahydrofolate is transferred onto alpha-ketoisovalerate to form ketopantoate. The polypeptide is 3-methyl-2-oxobutanoate hydroxymethyltransferase (Psychrobacter sp. (strain PRwf-1)).